We begin with the raw amino-acid sequence, 307 residues long: tRNA-cytidine(32) 2-sulfurtransferase (307 aa).

The PP-loop motif motif lies at 44-49 (SGGKDS). 3 residues coordinate [4Fe-4S] cluster: Cys119, Cys122, and Cys210.

It belongs to the TtcA family. In terms of assembly, homodimer. It depends on Mg(2+) as a cofactor. [4Fe-4S] cluster is required as a cofactor.

The protein resides in the cytoplasm. The enzyme catalyses cytidine(32) in tRNA + S-sulfanyl-L-cysteinyl-[cysteine desulfurase] + AH2 + ATP = 2-thiocytidine(32) in tRNA + L-cysteinyl-[cysteine desulfurase] + A + AMP + diphosphate + H(+). Its pathway is tRNA modification. Its function is as follows. Catalyzes the ATP-dependent 2-thiolation of cytidine in position 32 of tRNA, to form 2-thiocytidine (s(2)C32). The sulfur atoms are provided by the cysteine/cysteine desulfurase (IscS) system. In Aliivibrio salmonicida (strain LFI1238) (Vibrio salmonicida (strain LFI1238)), this protein is tRNA-cytidine(32) 2-sulfurtransferase.